The primary structure comprises 181 residues: Aminoglycoside 2'-N-acetyltransferase (181 aa).

The 152-residue stretch at 11–162 (VHTADLDSET…DGTVFVLPID (152 aa)) folds into the N-acetyltransferase domain. Residues Asp35 and 82–83 (EG) each bind substrate. CoA is bound by residues 84 to 86 (VAV) and 91 to 96 (RGQRLV). Residues Ser117 and 151 to 152 (DD) contribute to the substrate site.

The protein belongs to the AAC(2')-I acetyltransferase family. In terms of assembly, homodimer.

In terms of biological role, catalyzes the coenzyme A-dependent acetylation of the 2' hydroxyl or amino group of a broad spectrum of aminoglycosides. It confers resistance to aminoglycosides. The polypeptide is Aminoglycoside 2'-N-acetyltransferase (aac) (Mycobacterium bovis (strain ATCC BAA-935 / AF2122/97)).